Here is a 361-residue protein sequence, read N- to C-terminus: Phospho-N-acetylmuramoyl-pentapeptide-transferase (361 aa).

A run of 10 helical transmembrane segments spans residues 28–48 (LAII…IEFL), 74–94 (TMGG…LADL), 99–119 (IWIT…DDYA), 133–153 (SKLL…EYLD), 168–188 (LSLD…VGSS), 203–223 (VPIA…GNLI), 236–256 (TGEL…FLWF), 263–283 (VFMG…ISVI), 288–308 (IVLA…ILQV), and 338–358 (KVVI…LSSL).

This sequence belongs to the glycosyltransferase 4 family. MraY subfamily. Mg(2+) serves as cofactor.

It localises to the cell inner membrane. The catalysed reaction is UDP-N-acetyl-alpha-D-muramoyl-L-alanyl-gamma-D-glutamyl-meso-2,6-diaminopimeloyl-D-alanyl-D-alanine + di-trans,octa-cis-undecaprenyl phosphate = di-trans,octa-cis-undecaprenyl diphospho-N-acetyl-alpha-D-muramoyl-L-alanyl-D-glutamyl-meso-2,6-diaminopimeloyl-D-alanyl-D-alanine + UMP. It participates in cell wall biogenesis; peptidoglycan biosynthesis. Functionally, catalyzes the initial step of the lipid cycle reactions in the biosynthesis of the cell wall peptidoglycan: transfers peptidoglycan precursor phospho-MurNAc-pentapeptide from UDP-MurNAc-pentapeptide onto the lipid carrier undecaprenyl phosphate, yielding undecaprenyl-pyrophosphoryl-MurNAc-pentapeptide, known as lipid I. The sequence is that of Phospho-N-acetylmuramoyl-pentapeptide-transferase from Rickettsia africae (strain ESF-5).